Reading from the N-terminus, the 94-residue chain is Aspartyl/glutamyl-tRNA(Asn/Gln) amidotransferase subunit C (94 aa).

It belongs to the GatC family. As to quaternary structure, heterotrimer of A, B and C subunits.

It catalyses the reaction L-glutamyl-tRNA(Gln) + L-glutamine + ATP + H2O = L-glutaminyl-tRNA(Gln) + L-glutamate + ADP + phosphate + H(+). The enzyme catalyses L-aspartyl-tRNA(Asn) + L-glutamine + ATP + H2O = L-asparaginyl-tRNA(Asn) + L-glutamate + ADP + phosphate + 2 H(+). Functionally, allows the formation of correctly charged Asn-tRNA(Asn) or Gln-tRNA(Gln) through the transamidation of misacylated Asp-tRNA(Asn) or Glu-tRNA(Gln) in organisms which lack either or both of asparaginyl-tRNA or glutaminyl-tRNA synthetases. The reaction takes place in the presence of glutamine and ATP through an activated phospho-Asp-tRNA(Asn) or phospho-Glu-tRNA(Gln). This is Aspartyl/glutamyl-tRNA(Asn/Gln) amidotransferase subunit C from Desulfotalea psychrophila (strain LSv54 / DSM 12343).